Consider the following 117-residue polypeptide: SYEFSDCNENEYQTYVTDHSPQCILNDPLRPDTVSTPVSGNELLEAGEDCDCGAPANPCCDAATCKLRPGAQCAEGLCCDQCRFMKEGTICRMARGDDMDDYCNGISAGCPRNPFHA.

A Disintegrin domain is found at 36–117; it reads TPVSGNELLE…AGCPRNPFHA (82 aa). Intrachain disulfides connect Cys50-Cys65, Cys52-Cys60, Cys59-Cys82, Cys73-Cys79, Cys78-Cys103, and Cys91-Cys110. The Cell attachment site motif lies at 95-97; sequence RGD.

This sequence belongs to the venom metalloproteinase (M12B) family. P-II subfamily. P-IIa sub-subfamily. As to quaternary structure, monomer. Zn(2+) is required as a cofactor. In terms of tissue distribution, expressed by the venom gland.

Its subcellular location is the secreted. Impairs hemostasis in the envenomed animal. In terms of biological role, inhibits platelet aggregation and bone resorption. The polypeptide is Zinc metalloproteinase/disintegrin (Gloydius halys (Chinese water mocassin)).